The following is an 862-amino-acid chain: Axin-1 (862 aa).

Residues 1–78 (MNIQEQGFPL…GYEPEGSASP (78 aa)) form a disordered region. The Tankyrase-binding motif signature appears at 20–29 (APRPPVPGEE). Phosphoserine; by CK1 occurs at positions 75 and 77. In terms of domain architecture, RGS spans 88-211 (SLHSLLDDQD…LKSDIYLEYT (124 aa)). Positions 209–338 (EYTRTGSESP…DADTLSLTDS (130 aa)) are interaction with TP53. Disordered stretches follow at residues 215 to 289 (SESP…YSEG) and 316 to 344 (TSAN…DGIP). Serine 217 is modified (phosphoserine; by CK1). Over residues 242–258 (NEDEEWKCDQDMDEDDG) the composition is skewed to acidic residues. Positions 325-339 (SLSSDADTLSLTDSS) are enriched in low complexity. The interaction with GSK3B stretch occupies residues 348-433 (IRKQHRREMQ…DGDPSSGPPG (86 aa)). An interaction with SIAH1 and SIAH2 region spans residues 353-411 (RREMQESVQVNGRVPLPHIPRTYRVPKEVRVEPQKFAEELIHRLEAVQRTREAEEKLEE). Residues 413–441 (LKRVRMEEEGEDGDPSSGPPGPCHKLPPA) are disordered. The segment covering 429 to 441 (SGPPGPCHKLPPA) has biased composition (pro residues). Positions 434–502 (PCHKLPPAPA…SPDSGHVAKM (69 aa)) are interaction with CTNNB1. At serine 469 the chain carries Phosphoserine; by CK1. The segment at 480–500 (RTPGRQSPGPGHRSPDSGHVA) is disordered. Threonine 481 is modified (phosphothreonine; by GSK3-beta). Phosphoserine is present on residues serine 486, serine 493, and serine 511. The segment at 507–757 (GGAASGHGKH…PVLHVVPAVS (251 aa)) is interaction with RNF111. The segment covering 531 to 544 (HHRHVHHHVHHSTA) has biased composition (basic residues). Disordered regions lie at residues 531-629 (HHRH…AEKN) and 641-679 (KEIS…GPQL). Over residues 545-556 (RPKEQVEAEATR) the composition is skewed to basic and acidic residues. The interaction with PPP2CA stretch occupies residues 575–789 (SRGYSESVGA…CDSIVVAYYF (215 aa)). Phosphoserine is present on serine 581. An interaction with HIPK2 region spans residues 677 to 752 (PQLRTSVQPS…RPACAPVLHV (76 aa)). A DIX domain is found at 780-862 (CDSIVVAYYF…KIIGKVEKVD (83 aa)). Glycyl lysine isopeptide (Lys-Gly) (interchain with G-Cter in SUMO) cross-links involve residues lysine 857 and lysine 860.

As to quaternary structure, homodimer. Interacts with ZBED3; the interaction is direct, enhanced by protein kinase GSK3B and casein kinase CSNK1E activities and decreases GSK3B-induced beta-catenin serine and threonine phosphorylations. Component of the beta-catenin destruction complex, containing at least, CTNNB1, an axin and GSK3B, that regulates CTNNB1 protein levels through phosphorylation and ubiquitination. Interacts with CTNNB1 (via the armadillo repeats 2-7). Interacts with GSK3B; the interaction hyperphosphorylates CTNNB1 leading to its ubiquitination and destruction. Component of the AXIN1-HIPK2-TP53 complex. Interacts directly in the complex with TP53 and HIPK2. Interacts with DAXX; the interaction stimulates the interaction of DAXX with TP53, stimulates 'Ser-46' phosphorylation of TP53 and induces cell death on UV irradiation. Also binds APC, SMAD6, SMAD7 and RNF111. Interacts with DIXDC1; prevents interaction with MAP3K1. Interacts with MAP3K4. Interacts with ANKRD6 and AIDA. Interacts with MDFI; the interaction decreases AXIN1-mediated JUN N-terminal kinase (JNK) activation. Interacts with MDFIC; the interaction inhibits beta-cateninin-mediated signaling and AXIN1-mediated JUN N-terminal kinase (JNK) activation. Interacts with LRP5 (via its phosphorylated PPPSP motifs); the interaction is stimulated by WNT1 and GSK3B and activates beta-catenin signaling. Interacts (via the C-terminal) with PPP1CA; the interaction dephosphorylates AXIN1 and regulates interaction with GSK3B. Interacts with PPP2CA; the interaction dephosphorylates AXIN1. Interacts with MACF1. Found in a complex composed of MACF1, APC, AXIN1, CTNNB1 and GSK3B. Interacts with TNKS. Interacts with DAB2; the interaction is mutually exclusive with the AXIN1:PPP1CA interaction. Interacts with WDR26. Interacts with GID8. Interacts with SIAH1 and SIAH2; both probably catalyze AXIN1 ubiquitination and subsequent proteasome-mediated ubiquitin-dependent degradation. Interaction with GSK3B and AXIN1 is competitive. Phosphorylation and dephosphorylation of AXIN1 regulates assembly and function of the beta-catenin complex. Phosphorylated by CK1 and GSK3B. Dephosphorylated by PPP1CA and PPP2CA. Phosphorylation by CK1 enhances binding of GSK3B to AXIN1. In terms of processing, ADP-ribosylated by tankyrase TNKS and TNKS2. Poly-ADP-ribosylated protein is recognized by RNF146, followed by ubiquitination at 'Lys-48' and subsequent activation of the Wnt signaling pathway. Post-translationally, ubiquitinated by RNF146 when poly-ADP-ribosylated, leading to its degradation and subsequent activation of the Wnt signaling pathway. Sumoylation at Lys-857 and Lys-860 prevents ubiquitination and degradation. Sumoylation is required for AXIN1-mediated JNK activation. Deubiquitinated by USP34, deubiquitinated downstream of beta-catenin stabilization step: deubiquitination is important for nuclear accumulation during Wnt signaling to positively regulate beta-catenin (CTNBB1)-mediated transcription. Ubiquitination by SIAH1 and SIAH2 induces its proteasomal degradation as part of the activation of the Wnt signaling pathway. As to expression, ubiquitously expressed.

Its subcellular location is the cytoplasm. It is found in the nucleus. The protein localises to the membrane. The protein resides in the cell membrane. Its function is as follows. Component of the beta-catenin destruction complex required for regulating CTNNB1 levels through phosphorylation and ubiquitination, and modulating Wnt-signaling. Controls dorsoventral patterning via two opposing effects; down-regulates CTNNB1 to inhibit the Wnt signaling pathway and ventralize embryos, but also dorsalizes embryos by activating a Wnt-independent JNK signaling pathway. In Wnt signaling, probably facilitates the phosphorylation of CTNNB1 and APC by GSK3B. Likely to function as a tumor suppressor. Enhances TGF-beta signaling by recruiting the RNF111 E3 ubiquitin ligase and promoting the degradation of inhibitory SMAD7. Also a component of the AXIN1-HIPK2-TP53 complex which controls cell growth, apoptosis and development. Facilitates the phosphorylation of TP53 by HIPK2 upon ultraviolet irradiation. The polypeptide is Axin-1 (AXIN1) (Homo sapiens (Human)).